Consider the following 1979-residue polypeptide: E3 ubiquitin-protein ligase TTC3 (1979 aa).

The tract at residues 1-230 (MDDFAEGGLS…RHSCMQCVKQ (230 aa)) is interaction with POLG. 2 TPR repeats span residues 231 to 264 (GELM…RPEN) and 266 to 298 (LLYG…KNTW). Serine 378 carries the phosphoserine modification. The segment at 422-457 (CDCHPEFLPPPSQPPRHKGKQKSRNNESEKPSFNSE) is disordered. 2 TPR repeats span residues 536–572 (VLVV…YPNE) and 576–609 (CLAY…ISRL). Positions 783–811 (LAQERMEEDLRESNPPKNEEPEETSDSAQ) are disordered. A Phosphoserine modification is found at serine 1009. Disordered stretches follow at residues 1021–1067 (NKGK…GPFA), 1214–1289 (QPDV…EEAK), 1402–1427 (QGSA…SSDS), 1574–1601 (KNDG…DEKT), 1757–1776 (MDSA…GSPT), 1788–1821 (KGAS…KKPS), and 1873–1927 (DEQK…PAPD). Low complexity predominate over residues 1036–1050 (VGSGAASVAPSSEAV). Serine 1060 is subject to Phosphoserine. Basic and acidic residues predominate over residues 1214–1227 (QPDVKSEALSEDVK). The span at 1248 to 1257 (DSDSSSGSAS) shows a compositional bias: low complexity. Residues 1576-1586 (DGFDKECEPHP) are compositionally biased toward basic and acidic residues. Composition is skewed to polar residues over residues 1788–1799 (KGASQVSPSEQS) and 1808–1821 (GQAT…KKPS). Serine 1794 is subject to Phosphoserine. The segment covering 1873 to 1890 (DEQKKKKPNPGKDKKTSE) has biased composition (basic and acidic residues). An RING-type; atypical zinc finger spans residues 1931 to 1971 (CEICHEIFKSKNMRVLKCGHKFHKGCFKQWLKGQSTCPTCG).

Interacts (when phosphorylated on Ser-378) with AKT1, AKT2 and AKT3 (when phosphorylated). Interacts with CIT. Interacts with POLG. Interacts with HSP70. Interacts with SMURF2. In terms of processing, phosphorylation on Ser-378 by Akt is required for ubiquitin ligase activity. Proteolytically cleaved into differently sized N- and C-terminal fragments.

The protein resides in the nucleus. The protein localises to the cytoplasm. It localises to the golgi apparatus. It catalyses the reaction S-ubiquitinyl-[E2 ubiquitin-conjugating enzyme]-L-cysteine + [acceptor protein]-L-lysine = [E2 ubiquitin-conjugating enzyme]-L-cysteine + N(6)-ubiquitinyl-[acceptor protein]-L-lysine.. It functions in the pathway protein modification; protein ubiquitination. E3 ubiquitin-protein ligase which catalyzes the formation of 'Lys-48'-polyubiquitin chains. Mediates the ubiquitination and subsequent degradation of phosphorylated Akt (AKT1, AKT2 and AKT3) in the nucleus. Acts as a terminal regulator of Akt signaling after activation; its phosphorylation by Akt, which is a prerequisite for ubiquitin ligase activity, suggests the existence of a regulation mechanism required to control Akt levels after activation. Positively regulates TGFB1-induced epithelial-mesenchymal transition and myofibroblast differentiation by mediating the ubiquitination and subsequent degradation of SMURF2. Regulates neuronal differentiation by regulating actin remodeling and Golgi organization via a signaling cascade involving RHOA, CIT and ROCK. Inhibits cell proliferation. This Mus musculus (Mouse) protein is E3 ubiquitin-protein ligase TTC3 (Ttc3).